Here is a 463-residue protein sequence, read N- to C-terminus: Cytochrome c-552 (463 aa).

The N-terminal stretch at 1–23 (MNVKSIALSAVIATSFLAAGAMA) is a signal peptide. Heme c is bound at residue histidine 83. Heme contacts are provided by cysteine 111, cysteine 114, and lysine 115. Heme c is bound by residues cysteine 149, cysteine 152, histidine 153, cysteine 191, cysteine 194, and histidine 195. Positions 197, 198, 246, and 248 each coordinate Ca(2+). Tyrosine 198 provides a ligand contact to substrate. Histidine 249 is a substrate binding site. Heme c-binding residues include histidine 260, cysteine 267, cysteine 270, histidine 271, histidine 286, cysteine 299, cysteine 302, histidine 303, and histidine 378.

The protein belongs to the cytochrome c-552 family. Ca(2+) is required as a cofactor. Requires heme c as cofactor.

It localises to the periplasm. The enzyme catalyses 6 Fe(III)-[cytochrome c] + NH4(+) + 2 H2O = 6 Fe(II)-[cytochrome c] + nitrite + 8 H(+). It functions in the pathway nitrogen metabolism; nitrate reduction (assimilation). Functionally, catalyzes the reduction of nitrite to ammonia, consuming six electrons in the process. This is Cytochrome c-552 from Shewanella frigidimarina (strain NCIMB 400).